The chain runs to 600 residues: Glutamine--fructose-6-phosphate aminotransferase [isomerizing] (600 aa).

Cys-2 (nucleophile; for GATase activity) is an active-site residue. The Glutamine amidotransferase type-2 domain maps to 2–217; it reads CGIVGFIGEQ…DKEIVIVTKE (216 aa). SIS domains follow at residues 283–422 and 452–590; these read IRNA…AKGE and LAKQ…VDKP. Lys-595 serves as the catalytic For Fru-6P isomerization activity.

As to quaternary structure, homodimer.

The protein resides in the cytoplasm. The catalysed reaction is D-fructose 6-phosphate + L-glutamine = D-glucosamine 6-phosphate + L-glutamate. Functionally, catalyzes the first step in hexosamine metabolism, converting fructose-6P into glucosamine-6P using glutamine as a nitrogen source. This Bacillus cereus (strain ATCC 10987 / NRS 248) protein is Glutamine--fructose-6-phosphate aminotransferase [isomerizing].